A 274-amino-acid chain; its full sequence is Chemotaxis protein methyltransferase 1 (274 aa).

One can recognise a CheR-type methyltransferase domain in the interval 1 to 274 (MSAANADFEL…CSPGIIYRAK (274 aa)). Residues N72, T74, R78, E115, D144, 200–201 (NL), and 217–218 (RN) each bind S-adenosyl-L-methionine.

It catalyses the reaction L-glutamyl-[protein] + S-adenosyl-L-methionine = [protein]-L-glutamate 5-O-methyl ester + S-adenosyl-L-homocysteine. In terms of biological role, methylation of the membrane-bound methyl-accepting chemotaxis proteins (MCP) to form gamma-glutamyl methyl ester residues in MCP. This chain is Chemotaxis protein methyltransferase 1 (cheR1), found in Pseudomonas aeruginosa (strain ATCC 15692 / DSM 22644 / CIP 104116 / JCM 14847 / LMG 12228 / 1C / PRS 101 / PAO1).